The primary structure comprises 223 residues: Small ribosomal subunit protein uS3 (223 aa).

Positions 39–117 constitute a KH type-2 domain; the sequence is IREFLRKKPS…RPELNAKLVA (79 aa).

It belongs to the universal ribosomal protein uS3 family. In terms of assembly, part of the 30S ribosomal subunit. Forms a tight complex with proteins S10 and S14.

Its function is as follows. Binds the lower part of the 30S subunit head. Binds mRNA in the 70S ribosome, positioning it for translation. This Chlamydia abortus (strain DSM 27085 / S26/3) (Chlamydophila abortus) protein is Small ribosomal subunit protein uS3.